Reading from the N-terminus, the 283-residue chain is Elongation factor Ts (283 aa).

The involved in Mg(2+) ion dislocation from EF-Tu stretch occupies residues 80 to 83; sequence TDFV.

Belongs to the EF-Ts family.

It is found in the cytoplasm. Associates with the EF-Tu.GDP complex and induces the exchange of GDP to GTP. It remains bound to the aminoacyl-tRNA.EF-Tu.GTP complex up to the GTP hydrolysis stage on the ribosome. The polypeptide is Elongation factor Ts (Cronobacter sakazakii (strain ATCC BAA-894) (Enterobacter sakazakii)).